The sequence spans 601 residues: Proline--tRNA ligase (601 aa).

Belongs to the class-II aminoacyl-tRNA synthetase family. ProS type 1 subfamily. As to quaternary structure, homodimer.

The protein localises to the cytoplasm. It carries out the reaction tRNA(Pro) + L-proline + ATP = L-prolyl-tRNA(Pro) + AMP + diphosphate. Its function is as follows. Catalyzes the attachment of proline to tRNA(Pro) in a two-step reaction: proline is first activated by ATP to form Pro-AMP and then transferred to the acceptor end of tRNA(Pro). As ProRS can inadvertently accommodate and process non-cognate amino acids such as alanine and cysteine, to avoid such errors it has two additional distinct editing activities against alanine. One activity is designated as 'pretransfer' editing and involves the tRNA(Pro)-independent hydrolysis of activated Ala-AMP. The other activity is designated 'posttransfer' editing and involves deacylation of mischarged Ala-tRNA(Pro). The misacylated Cys-tRNA(Pro) is not edited by ProRS. The chain is Proline--tRNA ligase from Trichodesmium erythraeum (strain IMS101).